Reading from the N-terminus, the 463-residue chain is L-seryl-tRNA(Sec) selenium transferase (463 aa).

K295 bears the N6-(pyridoxal phosphate)lysine mark.

The protein belongs to the SelA family. As to quaternary structure, homodecamer; pentamer of dimers. Binds only one seryl-tRNA(Sec) per dimer. It depends on pyridoxal 5'-phosphate as a cofactor.

It is found in the cytoplasm. It catalyses the reaction L-seryl-tRNA(Sec) + selenophosphate + H(+) = L-selenocysteinyl-tRNA(Sec) + phosphate. Its pathway is aminoacyl-tRNA biosynthesis; selenocysteinyl-tRNA(Sec) biosynthesis; selenocysteinyl-tRNA(Sec) from L-seryl-tRNA(Sec) (bacterial route): step 1/1. Its function is as follows. Converts seryl-tRNA(Sec) to selenocysteinyl-tRNA(Sec) required for selenoprotein biosynthesis. The polypeptide is L-seryl-tRNA(Sec) selenium transferase (Salmonella schwarzengrund (strain CVM19633)).